Consider the following 252-residue polypeptide: Carboxy-S-adenosyl-L-methionine synthase (252 aa).

Residues Tyr45, 70-72 (GCS), 95-96 (DN), 123-124 (DI), Asn138, and Arg205 contribute to the S-adenosyl-L-methionine site.

Belongs to the class I-like SAM-binding methyltransferase superfamily. Cx-SAM synthase family. Homodimer.

It catalyses the reaction prephenate + S-adenosyl-L-methionine = carboxy-S-adenosyl-L-methionine + 3-phenylpyruvate + H2O. Its function is as follows. Catalyzes the conversion of S-adenosyl-L-methionine (SAM) to carboxy-S-adenosyl-L-methionine (Cx-SAM). This chain is Carboxy-S-adenosyl-L-methionine synthase, found in Photorhabdus laumondii subsp. laumondii (strain DSM 15139 / CIP 105565 / TT01) (Photorhabdus luminescens subsp. laumondii).